A 501-amino-acid chain; its full sequence is Leukocyte receptor cluster member 9 (501 aa).

Disordered regions lie at residues 1 to 43 (MGSR…PAPP), 61 to 86 (RQPH…KPPL), 203 to 234 (GQEA…GELE), and 281 to 300 (QALG…WGPA). The C3H1-type zinc-finger motif lies at 40-67 (PAPPPACRFFLEGRCRFGARCRQPHPGA).

This chain is Leukocyte receptor cluster member 9 (LENG9), found in Homo sapiens (Human).